A 343-amino-acid chain; its full sequence is Coiled-coil domain-containing protein 97 (343 aa).

Methionine 1 is modified (N-acetylmethionine). Residues 1–37 are disordered; it reads MEAVATATAAKEPDKGCIEPGPGHWGELSRTPVPSKP. Threonine 47 is subject to Phosphothreonine. Disordered regions lie at residues 200 to 220, 234 to 277, and 292 to 343; these read ARTPTHQPPKPGSPGRPACPL, QQRL…DSEE, and RFLD…LDGD. Residues 224-262 are a coiled coil; that stretch reads LLQSYEERELQQRLLQQQEEEEACLEEEEEEEDSDEEDQ. A compositionally biased stretch (acidic residues) spans 241-261; the sequence is QEEEEACLEEEEEEEDSDEED. The segment covering 262–277 has biased composition (basic and acidic residues); the sequence is QRSGKDSEAWVPDSEE. 2 positions are modified to phosphoserine: serine 275 and serine 337. Residues 324–343 are compositionally biased toward acidic residues; sequence ERYFDEEEPEDAPSPELDGD.

As to quaternary structure, associates with splicing factor SF3B complex, involved in branch-site recognition.

It localises to the nucleus. In terms of biological role, may play a role pre-mRNA splicing through the association with the splicing factor SF3B complex which is involved in branch-site recognition. The sequence is that of Coiled-coil domain-containing protein 97 (CCDC97) from Homo sapiens (Human).